The chain runs to 204 residues: Holliday junction branch migration complex subunit RuvA (204 aa).

Residues 1–64 (MIGRLQGILL…EDAHLLFGFA (64 aa)) form a domain I region. A domain II region spans residues 65 to 143 (QKTDRTLFRE…GVKQSDFFVE (79 aa)). The tract at residues 144 to 155 (STHIPLSPSIES) is flexible linker. The segment at 156-204 (HSESSSDEAISALIALGYKPAEAEKMVKRVAKPELTSEQVIREALKAAL) is domain III.

It belongs to the RuvA family. In terms of assembly, homotetramer. Forms an RuvA(8)-RuvB(12)-Holliday junction (HJ) complex. HJ DNA is sandwiched between 2 RuvA tetramers; dsDNA enters through RuvA and exits via RuvB. An RuvB hexamer assembles on each DNA strand where it exits the tetramer. Each RuvB hexamer is contacted by two RuvA subunits (via domain III) on 2 adjacent RuvB subunits; this complex drives branch migration. In the full resolvosome a probable DNA-RuvA(4)-RuvB(12)-RuvC(2) complex forms which resolves the HJ.

Its subcellular location is the cytoplasm. The RuvA-RuvB-RuvC complex processes Holliday junction (HJ) DNA during genetic recombination and DNA repair, while the RuvA-RuvB complex plays an important role in the rescue of blocked DNA replication forks via replication fork reversal (RFR). RuvA specifically binds to HJ cruciform DNA, conferring on it an open structure. The RuvB hexamer acts as an ATP-dependent pump, pulling dsDNA into and through the RuvAB complex. HJ branch migration allows RuvC to scan DNA until it finds its consensus sequence, where it cleaves and resolves the cruciform DNA. This chain is Holliday junction branch migration complex subunit RuvA, found in Haemophilus influenzae (strain PittGG).